The following is a 116-amino-acid chain: Flagellar transcriptional regulator FlhD (116 aa).

The protein belongs to the FlhD family. In terms of assembly, homodimer; disulfide-linked. Forms a heterohexamer composed of two FlhC and four FlhD subunits. Each FlhC binds a FlhD dimer, forming a heterotrimer, and a hexamer assembles by dimerization of two heterotrimers.

The protein resides in the cytoplasm. Functions in complex with FlhC as a master transcriptional regulator that regulates transcription of several flagellar and non-flagellar operons by binding to their promoter region. Activates expression of class 2 flagellar genes, including fliA, which is a flagellum-specific sigma factor that turns on the class 3 genes. Also regulates genes whose products function in a variety of physiological pathways. The sequence is that of Flagellar transcriptional regulator FlhD from Enterobacter sp. (strain 22).